Reading from the N-terminus, the 276-residue chain is Large ribosomal subunit protein uL2 (276 aa).

Disordered stretches follow at residues 29-55 (PEKS…RHRG) and 219-276 (HVRG…RRTR). Positions 259-276 (TRNKKKQSSKLIVRRRTR) are enriched in basic residues.

Belongs to the universal ribosomal protein uL2 family. Part of the 50S ribosomal subunit. Forms a bridge to the 30S subunit in the 70S ribosome.

Its function is as follows. One of the primary rRNA binding proteins. Required for association of the 30S and 50S subunits to form the 70S ribosome, for tRNA binding and peptide bond formation. It has been suggested to have peptidyltransferase activity; this is somewhat controversial. Makes several contacts with the 16S rRNA in the 70S ribosome. In Rippkaea orientalis (strain PCC 8801 / RF-1) (Cyanothece sp. (strain PCC 8801)), this protein is Large ribosomal subunit protein uL2.